The sequence spans 127 residues: uncharacterized protein (127 aa).

The N-terminal stretch at 1–23 is a signal peptide; that stretch reads MSKPLKFLLWSSLALLLLQIGSG.

This is an uncharacterized protein from Arabidopsis thaliana (Mouse-ear cress).